The sequence spans 281 residues: NADPH-dependent 7-cyano-7-deazaguanine reductase (281 aa).

88–90 (VES) is a binding site for substrate. 90 to 91 (SK) serves as a coordination point for NADPH. The active-site Thioimide intermediate is C189. D196 serves as the catalytic Proton donor. 228-229 (HE) contacts substrate. 257–258 (RG) contributes to the NADPH binding site.

It belongs to the GTP cyclohydrolase I family. QueF type 2 subfamily. In terms of assembly, homodimer.

Its subcellular location is the cytoplasm. It catalyses the reaction 7-aminomethyl-7-carbaguanine + 2 NADP(+) = 7-cyano-7-deazaguanine + 2 NADPH + 3 H(+). The protein operates within tRNA modification; tRNA-queuosine biosynthesis. In terms of biological role, catalyzes the NADPH-dependent reduction of 7-cyano-7-deazaguanine (preQ0) to 7-aminomethyl-7-deazaguanine (preQ1). In Klebsiella pneumoniae (strain 342), this protein is NADPH-dependent 7-cyano-7-deazaguanine reductase.